Reading from the N-terminus, the 500-residue chain is Hexokinase-3 (500 aa).

Residues 4-24 traverse the membrane as a helical segment; it reads VGLGVAVGCAAVTCAIAAALV. The 453-residue stretch at 35–487 folds into the Hexokinase domain; it reads RRAVALLREF…SGVGAALLAA (453 aa). The interval 90–222 is hexokinase small subdomain; it reads SGSEEGVYYS…GLNVRVTALV (133 aa). Residues Gly-104, Thr-105, and Asn-106 each contribute to the ADP site. Positions 188, 189, 223, and 224 each coordinate D-glucose. The hexokinase large subdomain stretch occupies residues 223–476; sequence NDTVGTLALG…RNVTLRVTED (254 aa). An ADP-binding site is contributed by Ser-247. D-glucose contacts are provided by Asn-250, Glu-278, and Glu-309. Gly-441 contributes to the ADP binding site.

The protein belongs to the hexokinase family. As to expression, expressed in roots, leaves, flowers, immature seeds and seed coat. Expressed in young shoots, tiller buds, endosperm seven days after fertilization, and interconnecting tissues such as pulvini and nodes.

The protein localises to the mitochondrion outer membrane. The catalysed reaction is a D-hexose + ATP = a D-hexose 6-phosphate + ADP + H(+). It carries out the reaction D-fructose + ATP = D-fructose 6-phosphate + ADP + H(+). The enzyme catalyses D-glucose + ATP = D-glucose 6-phosphate + ADP + H(+). The protein operates within carbohydrate metabolism; hexose metabolism. It participates in carbohydrate degradation; glycolysis; D-glyceraldehyde 3-phosphate and glycerone phosphate from D-glucose: step 1/4. Functionally, fructose and glucose phosphorylating enzyme. Involved in the regulation of cell expansion in spikelet hulls, grain size, and gibberellin biosynthesis and homeostasis. The protein is Hexokinase-3 of Oryza sativa subsp. japonica (Rice).